We begin with the raw amino-acid sequence, 162 residues long: Mitochondrial fission process protein 1 (162 aa).

The next 3 membrane-spanning stretches (helical) occupy residues 36 to 56, 81 to 101, and 128 to 148; these read SLVK…YVAA, AIIA…IPGF, and TVTA…DAFV.

This sequence belongs to the MTFP1 family.

The protein resides in the mitochondrion inner membrane. Involved in the mitochondrial division probably by regulating membrane fission. Loss-of-function leads to apoptosis. This Caenorhabditis briggsae protein is Mitochondrial fission process protein 1.